Consider the following 297-residue polypeptide: Transmembrane protein 169 (297 aa).

Residues 1-88 form a disordered region; the sequence is MEESAPVESQ…EGEDFLDYPG (88 aa). Over 1 to 159 the chain is Extracellular; it reads MEESAPVESQ…CQVGADQGPH (159 aa). Low complexity predominate over residues 22-31; the sequence is RRAVAAVLAL. 2 stretches are compositionally biased toward acidic residues: residues 61–70 and 78–88; these read KTDEEPEESE and EEGEDFLDYPG. Residues 160-180 form a helical membrane-spanning segment; it reads VVLWTLVCLPVVFVLSFVVSF. Residues 181–210 lie on the Cytoplasmic side of the membrane; the sequence is YYGTITWYNIFLVYNEERTFWHKISCCPCL. A helical membrane pass occupies residues 211-231; the sequence is ILFYPVLIMTMASSLGLYAAV. Over 232 to 297 the chain is Extracellular; that stretch reads AQLSWSWAAW…PIQEVETSTV (66 aa).

The protein resides in the membrane. The polypeptide is Transmembrane protein 169 (Tmem169) (Mus musculus (Mouse)).